Reading from the N-terminus, the 340-residue chain is UDP-3-O-(3-hydroxymyristoyl)glucosamine N-acyltransferase (340 aa).

His-239 (proton acceptor) is an active-site residue.

This sequence belongs to the transferase hexapeptide repeat family. LpxD subfamily. As to quaternary structure, homotrimer.

It catalyses the reaction a UDP-3-O-[(3R)-3-hydroxyacyl]-alpha-D-glucosamine + a (3R)-hydroxyacyl-[ACP] = a UDP-2-N,3-O-bis[(3R)-3-hydroxyacyl]-alpha-D-glucosamine + holo-[ACP] + H(+). It carries out the reaction UDP-3-O-[(3R)-3-hydroxytetradecanoyl]-alpha-D-glucosamine + (3R)-hydroxytetradecanoyl-[ACP] = UDP-2-N,3-O-bis[(3R)-3-hydroxytetradecanoyl]-alpha-D-glucosamine + holo-[ACP] + H(+). Its pathway is glycolipid biosynthesis; lipid IV(A) biosynthesis; lipid IV(A) from (3R)-3-hydroxytetradecanoyl-[acyl-carrier-protein] and UDP-N-acetyl-alpha-D-glucosamine: step 3/6. Catalyzes the N-acylation of UDP-3-O-(hydroxytetradecanoyl)glucosamine using 3-hydroxytetradecanoyl-ACP as the acyl donor. Is involved in the biosynthesis of lipid A, a phosphorylated glycolipid that anchors the lipopolysaccharide to the outer membrane of the cell. In Sodalis glossinidius (strain morsitans), this protein is UDP-3-O-(3-hydroxymyristoyl)glucosamine N-acyltransferase.